The primary structure comprises 147 residues: UPF0251 protein CTC_01373 (147 aa).

The protein belongs to the UPF0251 family.

This chain is UPF0251 protein CTC_01373, found in Clostridium tetani (strain Massachusetts / E88).